Consider the following 223-residue polypeptide: DnaJ homolog subfamily B member 9 (223 aa).

A signal peptide spans 1-23; sequence MATPQSIFIFAICILMITELILA. A J domain is found at 26 to 90; the sequence is SYYDILGVPK…NRRKEYDTLG (65 aa). Residues 91-223 are divergent targeting domain; sequence HSAFTSGKGQ…VTTYTDCSGQ (133 aa). Phosphoserine is present on serine 133.

Interacts with HSPA5/BiP; interaction is direct. Interacts with ERN1/IRE1 (via the luminal region). Interacts with DERL1. Widely expressed. Expressed at highest level in the liver, placenta and kidney.

The protein resides in the endoplasmic reticulum lumen. Functionally, co-chaperone for Hsp70 protein HSPA5/BiP that acts as a key repressor of the ERN1/IRE1-mediated unfolded protein response (UPR). J domain-containing co-chaperones stimulate the ATPase activity of Hsp70 proteins and are required for efficient substrate recognition by Hsp70 proteins. In the unstressed endoplasmic reticulum, interacts with the luminal region of ERN1/IRE1 and selectively recruits HSPA5/BiP: HSPA5/BiP disrupts the dimerization of the active ERN1/IRE1 luminal region, thereby inactivating ERN1/IRE1. Also involved in endoplasmic reticulum-associated degradation (ERAD) of misfolded proteins. Required for survival of B-cell progenitors and normal antibody production. This Homo sapiens (Human) protein is DnaJ homolog subfamily B member 9 (DNAJB9).